Reading from the N-terminus, the 693-residue chain is Glycine--tRNA ligase beta subunit (693 aa).

This sequence belongs to the class-II aminoacyl-tRNA synthetase family. Tetramer of two alpha and two beta subunits.

It is found in the cytoplasm. The enzyme catalyses tRNA(Gly) + glycine + ATP = glycyl-tRNA(Gly) + AMP + diphosphate. The polypeptide is Glycine--tRNA ligase beta subunit (glyS) (Halalkalibacterium halodurans (strain ATCC BAA-125 / DSM 18197 / FERM 7344 / JCM 9153 / C-125) (Bacillus halodurans)).